Consider the following 265-residue polypeptide: Thiazole synthase (265 aa).

Lysine 106 acts as the Schiff-base intermediate with DXP in catalysis. Residues glycine 167, alanine 193–glycine 194, and asparagine 215–serine 216 each bind 1-deoxy-D-xylulose 5-phosphate.

It belongs to the ThiG family. As to quaternary structure, homotetramer. Forms heterodimers with either ThiH or ThiS.

Its subcellular location is the cytoplasm. The enzyme catalyses [ThiS sulfur-carrier protein]-C-terminal-Gly-aminoethanethioate + 2-iminoacetate + 1-deoxy-D-xylulose 5-phosphate = [ThiS sulfur-carrier protein]-C-terminal Gly-Gly + 2-[(2R,5Z)-2-carboxy-4-methylthiazol-5(2H)-ylidene]ethyl phosphate + 2 H2O + H(+). It participates in cofactor biosynthesis; thiamine diphosphate biosynthesis. In terms of biological role, catalyzes the rearrangement of 1-deoxy-D-xylulose 5-phosphate (DXP) to produce the thiazole phosphate moiety of thiamine. Sulfur is provided by the thiocarboxylate moiety of the carrier protein ThiS. In vitro, sulfur can be provided by H(2)S. The protein is Thiazole synthase of Prochlorococcus marinus subsp. pastoris (strain CCMP1986 / NIES-2087 / MED4).